Here is a 144-residue protein sequence, read N- to C-terminus: MLDIKKIKEILPHRYPFLLVDRVISVEEGKKVTAIKNVTANEEFFNGHFPEYPVMPGVLIVEALAQTSGIAMMQSEANKGKIGLFAGIDGCRFKRQVIPGDQLLLEAEITRMRGAIAKAKVKATVEGDLVCEAEIMFALSDLPK.

Histidine 48 is an active-site residue.

The protein belongs to the thioester dehydratase family. FabZ subfamily.

Its subcellular location is the cytoplasm. The catalysed reaction is a (3R)-hydroxyacyl-[ACP] = a (2E)-enoyl-[ACP] + H2O. In terms of biological role, involved in unsaturated fatty acids biosynthesis. Catalyzes the dehydration of short chain beta-hydroxyacyl-ACPs and long chain saturated and unsaturated beta-hydroxyacyl-ACPs. The polypeptide is 3-hydroxyacyl-[acyl-carrier-protein] dehydratase FabZ (Listeria welshimeri serovar 6b (strain ATCC 35897 / DSM 20650 / CCUG 15529 / CIP 8149 / NCTC 11857 / SLCC 5334 / V8)).